We begin with the raw amino-acid sequence, 146 residues long: Ribosome-binding factor A (146 aa).

The tract at residues 113 to 146 (IRDEREAQEPAQDPAQDSSQDASVEASDAPDKAE) is disordered.

The protein belongs to the RbfA family. Monomer. Binds 30S ribosomal subunits, but not 50S ribosomal subunits or 70S ribosomes.

Its subcellular location is the cytoplasm. One of several proteins that assist in the late maturation steps of the functional core of the 30S ribosomal subunit. Associates with free 30S ribosomal subunits (but not with 30S subunits that are part of 70S ribosomes or polysomes). Required for efficient processing of 16S rRNA. May interact with the 5'-terminal helix region of 16S rRNA. This chain is Ribosome-binding factor A, found in Gemmatimonas aurantiaca (strain DSM 14586 / JCM 11422 / NBRC 100505 / T-27).